A 434-amino-acid chain; its full sequence is UDP-glucose 6-dehydrogenase (434 aa).

Residues 2 to 19 (NITF…GVMM), V11, D30, K35, T121, and E152 contribute to the NAD(+) site. Substrate is bound by residues 148 to 152 (EFLRE), K204, N208, 249 to 253 (FLNAG), and G257. C260 serves as the catalytic Nucleophile. Residue K263 participates in NAD(+) binding. K321 contributes to the substrate binding site. Residue R328 participates in NAD(+) binding.

The protein belongs to the UDP-glucose/GDP-mannose dehydrogenase family.

The catalysed reaction is UDP-alpha-D-glucose + 2 NAD(+) + H2O = UDP-alpha-D-glucuronate + 2 NADH + 3 H(+). It functions in the pathway nucleotide-sugar biosynthesis; UDP-alpha-D-glucuronate biosynthesis; UDP-alpha-D-glucuronate from UDP-alpha-D-glucose: step 1/1. This chain is UDP-glucose 6-dehydrogenase (udg), found in Rickettsia bellii (strain RML369-C).